We begin with the raw amino-acid sequence, 138 residues long: Large ribosomal subunit protein uL16 (138 aa).

A compositionally biased stretch (basic residues) spans 1 to 17; sequence MLIPRKVKHRKQHHPRQ. Residues 1 to 22 form a disordered region; that stretch reads MLIPRKVKHRKQHHPRQRGIAS.

The protein belongs to the universal ribosomal protein uL16 family. As to quaternary structure, part of the 50S ribosomal subunit.

Binds 23S rRNA and is also seen to make contacts with the A and possibly P site tRNAs. In Mycobacterium avium (strain 104), this protein is Large ribosomal subunit protein uL16.